A 306-amino-acid polypeptide reads, in one-letter code: D-alanine--D-alanine ligase (306 aa).

In terms of domain architecture, ATP-grasp spans 101-303 (KQVWQAVGLP…FSQLVVKILE (203 aa)). Residue 134-189 (FTHLGLPLIVKPSREGSSVGMSKVNTLSDLPAALEEAFRHDDDVLVEKWLSGPEYT) coordinates ATP. Asp257, Glu270, and Asn272 together coordinate Mg(2+).

It belongs to the D-alanine--D-alanine ligase family. Requires Mg(2+) as cofactor. Mn(2+) serves as cofactor.

The protein localises to the cytoplasm. The enzyme catalyses 2 D-alanine + ATP = D-alanyl-D-alanine + ADP + phosphate + H(+). It participates in cell wall biogenesis; peptidoglycan biosynthesis. Cell wall formation. This is D-alanine--D-alanine ligase from Pectobacterium atrosepticum (strain SCRI 1043 / ATCC BAA-672) (Erwinia carotovora subsp. atroseptica).